The chain runs to 336 residues: Holliday junction branch migration complex subunit RuvB (336 aa).

The tract at residues 4-185 (MDERLLSGES…FGVLSRLEYY (182 aa)) is large ATPase domain (RuvB-L). Residues leucine 24, arginine 25, glycine 66, lysine 69, threonine 70, threonine 71, 132-134 (EDF), arginine 175, tyrosine 185, and arginine 222 each bind ATP. Threonine 70 is a Mg(2+) binding site. Residues 186-256 (TVDQLSAIVE…ITQMALELLQ (71 aa)) form a small ATPAse domain (RuvB-S) region. The tract at residues 259 to 336 (KLGLDHIDHK…EHFGMEMPKV (78 aa)) is head domain (RuvB-H). DNA-binding residues include arginine 314 and arginine 319.

Belongs to the RuvB family. As to quaternary structure, homohexamer. Forms an RuvA(8)-RuvB(12)-Holliday junction (HJ) complex. HJ DNA is sandwiched between 2 RuvA tetramers; dsDNA enters through RuvA and exits via RuvB. An RuvB hexamer assembles on each DNA strand where it exits the tetramer. Each RuvB hexamer is contacted by two RuvA subunits (via domain III) on 2 adjacent RuvB subunits; this complex drives branch migration. In the full resolvosome a probable DNA-RuvA(4)-RuvB(12)-RuvC(2) complex forms which resolves the HJ.

The protein resides in the cytoplasm. It carries out the reaction ATP + H2O = ADP + phosphate + H(+). Its function is as follows. The RuvA-RuvB-RuvC complex processes Holliday junction (HJ) DNA during genetic recombination and DNA repair, while the RuvA-RuvB complex plays an important role in the rescue of blocked DNA replication forks via replication fork reversal (RFR). RuvA specifically binds to HJ cruciform DNA, conferring on it an open structure. The RuvB hexamer acts as an ATP-dependent pump, pulling dsDNA into and through the RuvAB complex. RuvB forms 2 homohexamers on either side of HJ DNA bound by 1 or 2 RuvA tetramers; 4 subunits per hexamer contact DNA at a time. Coordinated motions by a converter formed by DNA-disengaged RuvB subunits stimulates ATP hydrolysis and nucleotide exchange. Immobilization of the converter enables RuvB to convert the ATP-contained energy into a lever motion, pulling 2 nucleotides of DNA out of the RuvA tetramer per ATP hydrolyzed, thus driving DNA branch migration. The RuvB motors rotate together with the DNA substrate, which together with the progressing nucleotide cycle form the mechanistic basis for DNA recombination by continuous HJ branch migration. Branch migration allows RuvC to scan DNA until it finds its consensus sequence, where it cleaves and resolves cruciform DNA. This chain is Holliday junction branch migration complex subunit RuvB, found in Bacillus cereus (strain ZK / E33L).